A 243-amino-acid chain; its full sequence is Auxin-induced protein AUX28 (243 aa).

The EAR-like (transcriptional repression) motif lies at 8–12; that stretch reads LRLGL. A disordered region spans residues 54–91; the sequence is AATTAAAAADPTDKHKTLPKEKTLLPADPAKPPAKTQV. Residues 64–76 show a composition bias toward basic and acidic residues; it reads PTDKHKTLPKEKT. Positions 77–89 are enriched in low complexity; the sequence is LLPADPAKPPAKT. Residues 123–223 enclose the PB1 domain; sequence ASFVKVSMDG…SCKRLRIMKG (101 aa).

Belongs to the Aux/IAA family. In terms of assembly, homodimers and heterodimers.

The protein resides in the nucleus. Its function is as follows. Aux/IAA proteins are short-lived transcriptional factors that function as repressors of early auxin response genes at low auxin concentrations. Repression is thought to result from the interaction with auxin response factors (ARFs), proteins that bind to the auxin-responsive promoter element (AuxRE). Formation of heterodimers with ARF proteins may alter their ability to modulate early auxin response genes expression. In Glycine max (Soybean), this protein is Auxin-induced protein AUX28 (AUX28).